The sequence spans 727 residues: Polyribonucleotide nucleotidyltransferase (727 aa).

Asp488 and Asp494 together coordinate Mg(2+). One can recognise a KH domain in the interval 555-614 (PKLYTMKINPEKIRDVIGKGGATIRALTDETGCQINIEEDGTITIAATEAAKADEAKRRI). The S1 motif domain occupies 624–692 (GKIYEGPVTK…DKGRVKLSMK (69 aa)). The interval 691 to 727 (MKALADRPAGDSGRPAPAERGERRERRDGGASEQQQQ) is disordered. A compositionally biased stretch (basic and acidic residues) spans 707–720 (PAERGERRERRDGG).

This sequence belongs to the polyribonucleotide nucleotidyltransferase family. Mg(2+) is required as a cofactor.

The protein localises to the cytoplasm. It carries out the reaction RNA(n+1) + phosphate = RNA(n) + a ribonucleoside 5'-diphosphate. Its function is as follows. Involved in mRNA degradation. Catalyzes the phosphorolysis of single-stranded polyribonucleotides processively in the 3'- to 5'-direction. The protein is Polyribonucleotide nucleotidyltransferase of Acidovorax sp. (strain JS42).